We begin with the raw amino-acid sequence, 336 residues long: Flagellar filament 41 kDa core protein (336 aa).

The tract at residues 208–236 (AAPVQEGVQQEGAQQPAPATAPSQGGVNS) is disordered. Residues 210–233 (PVQEGVQQEGAQQPAPATAPSQGG) are compositionally biased toward low complexity.

The protein belongs to the bacterial flagellin family. The flagellum consists of an outer layer composed of repeating units of FlaA around a core that contains several antigenically related polypeptides.

The protein resides in the periplasmic flagellum. It localises to the periplasm. Functionally, component of the core of the flagella. The sequence is that of Flagellar filament 41 kDa core protein (fla) from Borreliella burgdorferi (strain ATCC 35210 / DSM 4680 / CIP 102532 / B31) (Borrelia burgdorferi).